A 276-amino-acid chain; its full sequence is 3-methyl-2-oxobutanoate hydroxymethyltransferase (276 aa).

2 residues coordinate Mg(2+): Asp50 and Asp89. Residues 50 to 51 (DS), Asp89, and Lys119 contribute to the 3-methyl-2-oxobutanoate site. Residue Glu121 participates in Mg(2+) binding. Residue Glu188 is the Proton acceptor of the active site.

The protein belongs to the PanB family. Homodecamer; pentamer of dimers. It depends on Mg(2+) as a cofactor.

The protein resides in the cytoplasm. The catalysed reaction is 3-methyl-2-oxobutanoate + (6R)-5,10-methylene-5,6,7,8-tetrahydrofolate + H2O = 2-dehydropantoate + (6S)-5,6,7,8-tetrahydrofolate. The protein operates within cofactor biosynthesis; (R)-pantothenate biosynthesis; (R)-pantoate from 3-methyl-2-oxobutanoate: step 1/2. Its function is as follows. Catalyzes the reversible reaction in which hydroxymethyl group from 5,10-methylenetetrahydrofolate is transferred onto alpha-ketoisovalerate to form ketopantoate. The protein is 3-methyl-2-oxobutanoate hydroxymethyltransferase of Paracoccus denitrificans (strain Pd 1222).